Here is a 195-residue protein sequence, read N- to C-terminus: Imidazoleglycerol-phosphate dehydratase (195 aa).

Belongs to the imidazoleglycerol-phosphate dehydratase family.

It is found in the cytoplasm. It carries out the reaction D-erythro-1-(imidazol-4-yl)glycerol 3-phosphate = 3-(imidazol-4-yl)-2-oxopropyl phosphate + H2O. The protein operates within amino-acid biosynthesis; L-histidine biosynthesis; L-histidine from 5-phospho-alpha-D-ribose 1-diphosphate: step 6/9. In Ruegeria sp. (strain TM1040) (Silicibacter sp.), this protein is Imidazoleglycerol-phosphate dehydratase.